Here is a 545-residue protein sequence, read N- to C-terminus: Tyrosine decarboxylase 2 (545 aa).

The segment covering G23–N44 has biased composition (gly residues). Residues G23–G45 form a disordered region. Positions 245 and 360 each coordinate L-tyrosine. An N6-(pyridoxal phosphate)lysine modification is found at K361. An L-tyrosine-binding site is contributed by Y390.

It belongs to the group II decarboxylase family. As to quaternary structure, homotetramer. Pyridoxal 5'-phosphate is required as a cofactor. As to expression, expressed specifically in flowers.

The protein localises to the cytoplasm. It carries out the reaction L-tyrosine + H(+) = tyramine + CO2. In terms of biological role, converts tyrosine into tyramine, a precursor of isoquinoline alkaloids and various amides. The chain is Tyrosine decarboxylase 2 from Arabidopsis thaliana (Mouse-ear cress).